The primary structure comprises 316 residues: Pantothenate kinase (316 aa).

95 to 102 (GSVAVGKS) lines the ATP pocket.

Belongs to the prokaryotic pantothenate kinase family.

It localises to the cytoplasm. It catalyses the reaction (R)-pantothenate + ATP = (R)-4'-phosphopantothenate + ADP + H(+). It participates in cofactor biosynthesis; coenzyme A biosynthesis; CoA from (R)-pantothenate: step 1/5. The polypeptide is Pantothenate kinase (Shewanella pealeana (strain ATCC 700345 / ANG-SQ1)).